Consider the following 505-residue polypeptide: 2,3-bisphosphoglycerate-independent phosphoglycerate mutase (505 aa).

Residues Asp13 and Ser63 each contribute to the Mn(2+) site. Ser63 acts as the Phosphoserine intermediate in catalysis. Residues His124, 153 to 154 (RD), Arg183, Arg189, 254 to 257 (RADR), and Lys330 each bind substrate. Mn(2+) is bound by residues Asp396, His400, Asp437, His438, and His456.

It belongs to the BPG-independent phosphoglycerate mutase family. As to quaternary structure, monomer. Mn(2+) is required as a cofactor.

It carries out the reaction (2R)-2-phosphoglycerate = (2R)-3-phosphoglycerate. It participates in carbohydrate degradation; glycolysis; pyruvate from D-glyceraldehyde 3-phosphate: step 3/5. Its function is as follows. Catalyzes the interconversion of 2-phosphoglycerate and 3-phosphoglycerate. This chain is 2,3-bisphosphoglycerate-independent phosphoglycerate mutase, found in Roseobacter denitrificans (strain ATCC 33942 / OCh 114) (Erythrobacter sp. (strain OCh 114)).